Here is a 71-residue protein sequence, read N- to C-terminus: Beta-defensin 25 (71 aa).

An N-terminal signal peptide occupies residues 1–22; the sequence is MAKWILLIVALLVLSHVPPGST. 3 cysteine pairs are disulfide-bonded: Cys-27-Cys-54, Cys-34-Cys-48, and Cys-38-Cys-55.

Belongs to the beta-defensin family.

Its subcellular location is the secreted. Has antibacterial activity. The protein is Beta-defensin 25 (Defb25) of Mus musculus (Mouse).